The primary structure comprises 319 residues: Acetyl-coenzyme A carboxylase carboxyl transferase subunit alpha (319 aa).

In terms of domain architecture, CoA carboxyltransferase C-terminal spans asparagine 35–aspartate 296.

The protein belongs to the AccA family. In terms of assembly, acetyl-CoA carboxylase is a heterohexamer composed of biotin carboxyl carrier protein (AccB), biotin carboxylase (AccC) and two subunits each of ACCase subunit alpha (AccA) and ACCase subunit beta (AccD).

It is found in the cytoplasm. The enzyme catalyses N(6)-carboxybiotinyl-L-lysyl-[protein] + acetyl-CoA = N(6)-biotinyl-L-lysyl-[protein] + malonyl-CoA. It participates in lipid metabolism; malonyl-CoA biosynthesis; malonyl-CoA from acetyl-CoA: step 1/1. Its function is as follows. Component of the acetyl coenzyme A carboxylase (ACC) complex. First, biotin carboxylase catalyzes the carboxylation of biotin on its carrier protein (BCCP) and then the CO(2) group is transferred by the carboxyltransferase to acetyl-CoA to form malonyl-CoA. This Escherichia coli O127:H6 (strain E2348/69 / EPEC) protein is Acetyl-coenzyme A carboxylase carboxyl transferase subunit alpha.